Here is a 583-residue protein sequence, read N- to C-terminus: MLO-like protein 6 (583 aa).

The Extracellular portion of the chain corresponds to 1–15; it reads MADQVKEKTLEETST. The chain crosses the membrane as a helical span at residues 16 to 36; it reads WAVAVVCFVLLLISIVIEKLI. Topologically, residues 37-61 are cytoplasmic; that stretch reads HKIGSWFKKKNKKALYEALEKVKAE. Residues 62 to 82 traverse the membrane as a helical segment; sequence LMLMGFISLLLTIGQGYISNI. Topologically, residues 83–161 are extracellular; it reads CIPKNIAASM…VSAYGMHQLH (79 aa). A helical membrane pass occupies residues 162–182; that stretch reads IFIFVLAVCHVIYCIVTYALG. The Cytoplasmic portion of the chain corresponds to 183–284; the sequence is KTKMRRWKKW…KYIQRSLEED (102 aa). Residues 285 to 305 traverse the membrane as a helical segment; that stretch reads FKTIVEINPVIWFIAVLFLLT. Over 306–314 the chain is Extracellular; it reads NTNGLNSYL. The helical transmembrane segment at 315–335 threads the bilayer; it reads WLPFIPFIVILIVGTKLQVII. Residues 336-368 lie on the Cytoplasmic side of the membrane; that stretch reads TKLGLRIQEKGDVVKGTPLVQPGDHFFWFGRPR. A helical membrane pass occupies residues 369-389; sequence FILFLIHLVLFTNAFQLAFFV. The Extracellular segment spans residues 390–411; the sequence is WSTYEFGLKNCFHESRVDVIIR. A helical membrane pass occupies residues 412–432; it reads ISIGLLVQILCSYVTLPLYAL. The Cytoplasmic segment spans residues 433–583; it reads VTQMGSKMKP…ISLRDFSFKR (151 aa). The segment at 447–468 is calmodulin-binding; it reads ERVATALKSWHHTAKKNIKHGR. The interval 461–583 is disordered; that stretch reads KKNIKHGRTS…ISLRDFSFKR (123 aa). Positions 470–484 are enriched in low complexity; that stretch reads SESTTPFSSRPTTPT. Basic and acidic residues predominate over residues 541 to 551; that stretch reads RFGEEESEKKF.

It belongs to the MLO family.

The protein localises to the membrane. In terms of biological role, may be involved in modulation of pathogen defense and leaf cell death. Activity seems to be regulated by Ca(2+)-dependent calmodulin binding and seems not to require heterotrimeric G proteins. The sequence is that of MLO-like protein 6 (MLO6) from Arabidopsis thaliana (Mouse-ear cress).